The chain runs to 165 residues: Fatty acid-binding protein homolog 3 (165 aa).

The signal sequence occupies residues 1–19 (MNLYLTLFSFCFLAIMAEA).

It belongs to the calycin superfamily. Fatty-acid binding protein (FABP) family. In terms of tissue distribution, expressed in presumptive hypodermal cells by the comma stage and in posterior body wall muscle cells by the two-fold stage. From L1 to adult stages, expression continues in body wall muscle cells adjacent to the pseudocoelom, while hypodermal expression is extinguished.

Its subcellular location is the secreted. Its function is as follows. May play a role in sequestering potentially toxic fatty acids and their peroxidation products, or it may be involved in the maintenance of the impermeable lipid layer of the eggshell. The protein is Fatty acid-binding protein homolog 3 (lbp-3) of Caenorhabditis elegans.